The primary structure comprises 161 residues: Pupal cuticle protein C1B (161 aa).

A run of 9 repeats spans residues 6 to 9 (AAPA), 14 to 17 (AAPA), 35 to 38 (AAPA), 87 to 90 (AAPV), 103 to 106 (AAPV), 112 to 115 (AAPV), 121 to 124 (AAPV), 130 to 133 (AAPV), and 143 to 146 (AAPA).

Its function is as follows. Component of the cuticle of the pupa of Tenebrio molitor. The sequence is that of Pupal cuticle protein C1B from Tenebrio molitor (Yellow mealworm beetle).